Here is a 1401-residue protein sequence, read N- to C-terminus: Alpha-latrotoxin-Lt1a (1401 aa).

The signal sequence occupies residues 1-20 (MISVGEIMERANHSLVRMRR). The tract at residues 17-20 (RMRR) is furin-like endopeptidase recognition region. A helix H8 is the probable transmembrane region of the tetrameric pore inserted in the target cell membrane region spans residues 238–257 (VLYALLYGTQTYVSVMFFLL). The cysteines at positions 413 and 1066 are disulfide-linked. ANK repeat units follow at residues 458–489 (LYNAASNPDSAVGFKEFTKLNYDGANIRATFD), 490–521 (HGRTVFHAAAKSGNDKIMFGLTFLAKSTELNQ), 525–554 (KGYTPIHVAADSGNAGIVNLLIQRGVSINS), 559–589 (FLQTPLHLAAQRGFVTTFQRLMESPEININE), 593–622 (DGFTPLHYAIRGGERILEAFLNQISIDVNA), 626–656 (TGLTPFHLAIIKNDWPVASTLLGSKKVDINA), 660–690 (NNITALHYAAILGYLETTKQLINLKEINANV), 695–723 (GLLSALHYAILYKHDDVASFLMRSSNVNV), 729–758 (GGITPLHLAVIQGRKQILSLMFDIGVNIEQ), 762–791 (EKYTPLHLAAMSKYPELIQILLDQGSNFEA), 795–824 (SGATPLHLATFKGKSQAALILLNNEVNWRD), 828–857 (NGQMPIHGAAMTGLLDVAQAIISIDATVVD), 862–891 (NSDTPLNLAAQNSHIDVIKYFIDQGADINT), 895–924 (KGLAPLLAFSKKGNLDMVKYLFDKNANVYI), 928–957 (DGMNFFYYAVQNGHLNIVKYAMSEKDKFEW), 971–1003 (EECAISHFAVCDAVQFDRIEIVKYFVGTLGNFA), 1004–1033 (ICGPLHQAARYGHLDIVKYLVEEEFLSVDG), 1035–1064 (KTDTPLCYASENGHFTVVQYLVSNGAKVNH), 1068–1097 (NGMTAIDKAITKNHLQVVQFLAANGVDFRR), 1101–1131 (RGTTPFLTAVAENALHIAEYLIREKRQDINI), 1137–1166 (DKDTALHLAVYYKNLQMIKLLIKYGIDVTI), and 1170–1199 (YDKTALDIAIDAKFSNIVEYLKTKSGKFRR). Residues 1026–1032 (EEFLSVD) form a 4C4.1 epitope region. Residues 1196 to 1199 (KFRR) are furin-like endopeptidase recognition region. Residues 1200 to 1401 (EYKSSYGERS…SDGILTKKLM (202 aa)) constitute a propeptide that is removed on maturation.

It belongs to the cationic peptide 01 (latrotoxin) family. 03 (alpha-latrotoxin) subfamily. Homotetramer in membranes. Post-translationally, processed by furin-like proteases at both the N- and C-termini. In terms of tissue distribution, expressed in venom gland, cephalothorax, and abdomen tissues from both males and females.

The protein resides in the secreted. It is found in the target cell membrane. Its function is as follows. Presynaptic neurotoxin that causes massive release of neurotransmitters from vertebrate (but not invertebrate) nerve terminals and endocrine cells via a complex mechanism involving activation of receptor(s) and toxin insertion into the plasma membrane with subsequent pore formation. Binds to neurexin-1-alpha (NRXN1) in a calcium dependent manner, adhesion G protein-coupled receptor L1 (ADGRL1, also termed latrophilin-1 and calcium-independent receptor of latrotoxin (CIRL)), and receptor-type tyrosine-protein phosphatase S (PTPRS), also termed PTP sigma. NRXN1 and PTPRS are suggested to provide a platform for binding and subsequent pore formation events. In contrast, binding to ADGRL1 does not involve oligomerization and channel formation, but direct downstream stimulation of the synaptic fusion machinery. In Latrodectus tredecimguttatus (Mediterranean black widow spider), this protein is Alpha-latrotoxin-Lt1a.